We begin with the raw amino-acid sequence, 757 residues long: DNA endonuclease RBBP8 (757 aa).

The interval 22 to 45 (DLWTKLKEYHDKETQGLQVKVTKL) is essential for binding to the MRN complex and for RPA focus formation on DNA damage. Residues 35-84 (TQGLQVKVTKLKKERILDAQRLEEFFTKNQQLREQQKVLHETIKVLEDRL) adopt a coiled-coil conformation. The tract at residues 45–160 (LKKERILDAQ…TDLESEEDVI (116 aa)) is required for interaction with LMO4, probably by stabilizing the interaction through RPPB8 dimerization. Residues Lys62 and Lys115 each participate in a glycyl lysine isopeptide (Lys-Gly) (interchain with G-Cter in SUMO2) cross-link. Positions 117-138 (ITELMNEKNTLQEENKKLSEQL) form a coiled coil. Residue Lys193 forms a Glycyl lysine isopeptide (Lys-Gly) (interchain with G-Cter in SUMO2) linkage. Ser272 bears the Phosphoserine mark. Thr309 carries the post-translational modification Phosphothreonine. A phosphoserine mark is found at Ser320, Ser321, and Ser343. A disordered region spans residues 348–375 (GKKTHLKTVPLSNTSAPGPEKPRSKSED). Glycyl lysine isopeptide (Lys-Gly) (interchain with G-Cter in SUMO2) cross-links involve residues Lys354 and Lys372. Position 373 is a phosphoserine (Ser373). Residues Lys390, Lys399, and Lys405 each participate in a glycyl lysine isopeptide (Lys-Gly) (interchain with G-Cter in SUMO2) cross-link. The segment covering 407–417 (TSEPISEQGNI) has biased composition (polar residues). The tract at residues 407–430 (TSEPISEQGNIGHSKDTDRDKHVV) is disordered. Positions 419 to 429 (HSKDTDRDKHV) are enriched in basic and acidic residues. Residues Lys433 and Lys443 each participate in a glycyl lysine isopeptide (Lys-Gly) (interchain with G-Cter in SUMO2) cross-link. Positions 484 to 488 (PLDLS) are PXDLS motif. The PXDLS motif motif lies at 484 to 488 (PLDLS). The tract at residues 503-551 (CENSKIRFRQVTLYEALKPIPRDSSSSRKALSGSCGLTKDSPEEPCLQE) is damage-recruitment motif. A Glycyl lysine isopeptide (Lys-Gly) (interchain with G-Cter in SUMO2); alternate cross-link involves residue Lys520. Residues 524–544 (RDSSSSRKALSGSCGLTKDSP) are disordered. Residues Lys564 and Lys570 each participate in a glycyl lysine isopeptide (Lys-Gly) (interchain with G-Cter in SUMO2) cross-link. Lys596 participates in a covalent cross-link: Glycyl lysine isopeptide (Lys-Gly) (interchain with G-Cter in SUMO2); alternate. Glycyl lysine isopeptide (Lys-Gly) (interchain with G-Cter in SUMO2) cross-links involve residues Lys605, Lys630, and Lys632. The segment at 633 to 677 (SLQNNQDVSFENIQWSIDPGADLSQYKMGVTVDDTKDGSQSRLAG) is required for interaction with LMO4, probably by making physical contact with LMO4. Ser656 carries the phosphoserine; by ATM modification. Lys668 participates in a covalent cross-link: Glycyl lysine isopeptide (Lys-Gly) (interchain with G-Cter in SUMO2). Ser671 bears the Phosphoserine mark. A compositionally biased stretch (basic and acidic residues) spans 696–728 (KKQEQKGEESPNGERKMNDSLEDMFDRTTHEEY). The tract at residues 696-757 (KKQEQKGEES…TTTKKPNISW (62 aa)) is disordered. Residue Lys711 forms a Glycyl lysine isopeptide (Lys-Gly) (interchain with G-Cter in SUMO2) linkage. Position 715 is a phosphoserine (Ser715). The segment covering 747–757 (STTTKKPNISW) has biased composition (polar residues).

Belongs to the COM1/SAE2/CtIP family. In terms of assembly, homotetramer; formed by antiparallel association of helical extensions protruding from the N-termini of two parallel coiled-coil dimers. Forms a dumbbell-shaped particle in which polar globular domains are held about 30 nm apart by a central rod. Homotetramerization is required for DNA-end resection and repair. Interacts (via the PXDLS motif) with CTBP1; the interaction is disrupted via binding of the adenovirus E1A to CTBP1. Component of the BRCA1-RBBP8 complex. Interacts (the Ser-321 phosphorylated form) with BRCA1 (via the C-terminal BRCT domains): the interaction occurs in the G2 phase, ubiquitinates RBBP8 and involves RBBP8 in BRCA1-dependent G2/M checkpoint control on DNA damage. Interacts with RB1. Interacts with the MRN complex. Interacts directly with MRE11; the interaction is required for efficient homologous recombination (HR) and regulation of the MRN complex. Interacts directly with RAD50. Interacts (when phosphorylated by CDK1) with NBN; promoting association with the MRN complex. Interacts with LMO4 (via the LIM zinc-binding 1 domain). Interacts with SIAH1. Interacts with RNF138. Interacts with EXD2. Interacts with CUL3 and KLHL15; this interaction leads to RBBP8 proteasomal degradation. Directly interacts with PIN1; this interaction depends upon RBBP8 phosphorylation, predominantly at Thr-309. Interacts with FZR1; this interaction leads to APC/C-mediated RBBP8 proteasomal degradation. Interacts with AUNIP; leading to recruit RBBP8 to sites of DNA damage. Interacts with SAMHD1. Interacts with HDGFL2. Post-translationally, hyperphosphorylation upon ionizing radiation results in dissociation from BRCA1. Phosphorylation by CDK1 is essential for the recruitment to DNA and the DNA repair function. Phosphorylated on Ser-321 as cells enter G2 phase. This phosphorylation is required for binding BRCA1 and for the G2/M DNA damage transition checkpoint control. Phosphorylation at Thr-309, probably catalyzed by CDK2, is required for PIN1-binding, while phosphorylation at Ser-272 serves as a PIN1 isomerization site. Phosphorylation at Thr-309 is cell-cycle dependent. It steadily increases during S phase, peaks at late S/G2 phase, and drops at G1. Phosphorylation is not required for tetramerization. Binds to DNA more strongly when dephosphorylated. In terms of processing, ubiquitinated. Ubiquitination at multiple sites by BRCA1 (via its N-terminal RING domain) does not lead to its proteasomal degradation but instead the ubiquitinated RBBP8 binds to chromatin following DNA damage and may play a role in G2/M checkpoint control. Ubiquitinated by RNF138 at its N-terminus. Ubiquitinated through 'Lys-48' by the E3 CUL3-KLHL15 complex; this modification leads to proteasomal degradation. Ubiquitinated by the E3 FZR1/APC/C complex; this modification leads to proteasomal degradation.

The protein resides in the nucleus. The protein localises to the chromosome. Functionally, endonuclease that cooperates with the MRE11-RAD50-NBN (MRN) complex in DNA-end resection, the first step of double-strand break (DSB) repair through the homologous recombination (HR) pathway. HR is restricted to S and G2 phases of the cell cycle and preferentially repairs DSBs resulting from replication fork collapse. Key determinant of DSB repair pathway choice, as it commits cells to HR by preventing classical non-homologous end-joining (NHEJ). Specifically promotes the endonuclease activity of the MRN complex to clear DNA ends containing protein adducts: recruited to DSBs by NBN following phosphorylation by CDK1, and promotes the endonuclease activity of MRE11 to clear protein-DNA adducts and generate clean double-strand break ends. Functions downstream of the MRN complex and ATM, promotes ATR activation and its recruitment to DSBs in the S/G2 phase facilitating the generation of ssDNA. Component of the BRCA1-RBBP8 complex that regulates CHEK1 activation and controls cell cycle G2/M checkpoints on DNA damage. During immunoglobulin heavy chain class-switch recombination, promotes microhomology-mediated alternative end joining (A-NHEJ) and plays an essential role in chromosomal translocations. Binds preferentially to DNA Y-junctions and to DNA substrates with blocked ends and promotes intermolecular DNA bridging. This is DNA endonuclease RBBP8 (RBBP8) from Bos taurus (Bovine).